The sequence spans 224 residues: Fibrillarin-like rRNA/tRNA 2'-O-methyltransferase (224 aa).

S-adenosyl-L-methionine contacts are provided by residues 82–83, 100–101, 125–126, and 145–148; these read TT, EF, DA, and DVAQ.

It belongs to the methyltransferase superfamily. Fibrillarin family. In terms of assembly, interacts with nop5. Component of box C/D small ribonucleoprotein (sRNP) particles that contain rpl7ae, FlpA and nop5, plus a guide RNA.

In terms of biological role, involved in pre-rRNA and tRNA processing. Utilizes the methyl donor S-adenosyl-L-methionine to catalyze the site-specific 2'-hydroxyl methylation of ribose moieties in rRNA and tRNA. Site specificity is provided by a guide RNA that base pairs with the substrate. Methylation occurs at a characteristic distance from the sequence involved in base pairing with the guide RNA. The chain is Fibrillarin-like rRNA/tRNA 2'-O-methyltransferase from Methanothermobacter thermautotrophicus (strain ATCC 29096 / DSM 1053 / JCM 10044 / NBRC 100330 / Delta H) (Methanobacterium thermoautotrophicum).